The following is a 422-amino-acid chain: MAGMYNQDGGGGAPIPSYGGDGYGGGGGYGGGDAGYGGRGASGGGSYGGRGGYGGGGGRGNRGGGGGGYQGGDRGGRGSGGGGRDGDWRCPNPSCGNVNFARRVECNKCGALAPSGTSSGANDRGGGGYSRGGGDSDRGGGRGGRNDSGRSYESSRYDGGSRSGGSYGSGSQRENGSYGQAPPPAAAIPSYDGSGSYPPPTGYGMEAVPPPTSYSGGPPSYGGPRGGYGSDAPSTGGRGGRSGGYDGGSAPRRQEASYEDAATEKVKQCDADCDDNCDNARIYISNLPPDVTTDELKDLFGGIGQVGRIKQKRGYKDQWPYNIKIYTDEKGNYKGDACLAYEDPSAAHSAGGFFNNYEMRGNKISVTMAEKSAPRAPTFDQRGGGRGGGGGGYGGGGGDRRRDNYSSGPDRNHHGGNRSRPY.

Disordered stretches follow at residues 1-24 (MAGMYNQDGGGGAPIPSYGGDGYG), 47-94 (YGGR…PNPS), 111-263 (ALAP…DAAT), and 368-422 (MAEK…SRPY). Gly residues-rich tracts occupy residues 8–24 (DGGGGAPIPSYGGDGYG) and 47–83 (YGGRGGYGGGGGRGNRGGGGGGYQGGDRGGRGSGGGG). The RanBP2-type zinc finger occupies 84–115 (RDGDWRCPNPSCGNVNFARRVECNKCGALAPS). The segment covering 123–133 (DRGGGGYSRGG) has biased composition (gly residues). A compositionally biased stretch (basic and acidic residues) spans 134–156 (GDSDRGGGRGGRNDSGRSYESSR). 2 stretches are compositionally biased toward gly residues: residues 219–229 (PSYGGPRGGYG) and 236–247 (GGRGGRSGGYDG). A compositionally biased stretch (basic and acidic residues) spans 252 to 263 (RRQEASYEDAAT). The 92-residue stretch at 280-371 (ARIYISNLPP…NKISVTMAEK (92 aa)) folds into the RRM domain. The segment covering 382–397 (RGGGRGGGGGGYGGGG) has biased composition (gly residues).

It belongs to the TAF15 family. In terms of assembly, component of the TFIID complex. TFIID is composed of TATA binding protein (TBP) and a number of TBP-associated factors (TAFs) whose MWs range from 14-217 kDa. Interacts with TAF4, TAF4B, TAF5, TAF12B and TAF14. As to expression, expressed in roots, leaves and inflorescences.

The protein localises to the nucleus. TAFs are components of the transcription factor IID (TFIID) complex that is essential for mediating regulation of RNA polymerase transcription. In Arabidopsis thaliana (Mouse-ear cress), this protein is Transcription initiation factor TFIID subunit 15b (TAF15B).